The chain runs to 522 residues: Lysine--tRNA ligase (522 aa).

A 'HIGH' region motif is present at residues P44–T52. Positions K290–S294 match the 'KMSKS' region motif. Residue K293 participates in ATP binding.

It belongs to the class-I aminoacyl-tRNA synthetase family.

Its subcellular location is the cytoplasm. It catalyses the reaction tRNA(Lys) + L-lysine + ATP = L-lysyl-tRNA(Lys) + AMP + diphosphate. The chain is Lysine--tRNA ligase from Rickettsia africae (strain ESF-5).